We begin with the raw amino-acid sequence, 1099 residues long: MPAKGRYFLNEGDEGPDQAALYEKYRLTSLHGPLLLLLLLVAAATCIALISIAFSHEDLRRHQVVLGTAFLMLTLFVALYVLVYVECLVQRWLRALALLTWACLMVLGSVLMWDSLENEAHAWEQVPFFLFVVFVVYALLPLSRRAAIVAGVTSTVSHLLVFGAVTRAFQTSMSSTQLGLQLLANAVILLGGNFTGAFHKHQLQDASRDLFIYTVKCIQIRRKLRVEKRQQENLLLSVLPAHISMGMKLAIIERLKEGGDRHYMPDNNFHSLYVKRHQNVSILYADIVGFTRLASDCSPKELVVVLNELFGKFDQIAKANECMRIKILGDCYYCVSGLPVSLPTHARNCVKMGLDICEAIKQVREATGVDISMRVGIHSGNVLCGVIGLRKWQYDVWSHDVSLANRMEAAGVPGRVHITEATLNHLDKAYEVEDGHGEQRDPYLKEMNIRTYLVIDPRSQQPPPPSHHLSKPKGDATLKMRASVRVTRYLESWGAARPFAHLNHRESVSSSETPISNGRRQKAIPLRRHRAPDRSASPKGRLEDDCDDEMLSAIEGLSSTRPCCSKSDDFHTFGPIFLEKGFEREYRLVPIPRARYDFACASLVFVCILLVHLLVMPRMATLGVSFGLVACLLGLVLSFCFATEFSRCFPSRSTLQAISESVETQPLVRLVLVVLTVGSLLTVAIINMPLTLNPGPEQPGDNKTSPLAAQNRVGTPCELLPYYTCSCILGFIACSVFLRMSLELKAMLLTVALVAYLLLFNLSPCWHVSGNSTETNGTQRTRLLLSDAQSMPSHTLAPGARETAPSPSYLERDLKIMVNFYLILFYATLILLSRQIDYYCRLDCLWKKKFKKEHEEFETMENVNRLLLENVLPAHVAAHFIGDKAAEDWYHQSYDCVCVMFASVPDFKVFYTECDVNKEGLECLRLLNEIIADFDELLLKPKFSGVEKIKTIGSTYMAAAGLSAPSGHENQDLERKHVHIGVLVEFSMALMSKLDGINRHSFNSFRLRVGINHGPVIAGVIGARKPQYDIWGNTVNVASRMESTGELGKIQVTEETCTILQGLGYSCECRGLINVKGKGELRTYFVCTDTAKFQGLGLN.

The Cytoplasmic segment spans residues 1 to 33 (MPAKGRYFLNEGDEGPDQAALYEKYRLTSLHGP). A run of 6 helical transmembrane segments spans residues 34–54 (LLLLLLLVAAATCIALISIAF), 63–83 (QVVLGTAFLMLTLFVALYVLV), 95–117 (ALALLTWACLMVLGSVLMWDSLE), 122–142 (AWEQVPFFLFVVFVVYALLPL), 147–167 (AIVAGVTSTVSHLLVFGAVTR), and 178–198 (LGLQLLANAVILLGGNFTGAF). Residues 199-595 (HKHQLQDASR…YRLVPIPRAR (397 aa)) are Cytoplasmic-facing. Asp286, Ile287, and Asp330 together coordinate Mg(2+). ATP contacts are provided by residues 286–291 (DIVGFT), 328–330 (LGD), and Arg374. The tract at residues 456 to 476 (DPRSQQPPPPSHHLSKPKGDA) is disordered. Residues 479-484 (KMRASV) form a mediates regulation of adenylate cyclase activity by C5 alpha-induced G- beta and gamma pathway region. The interval 493 to 501 (WGAARPFAH) is mediates regulation of adenylate cyclase activity by sphingosine 1-phosphate-induced G alpha 13 pathway. Residues 504-543 (HRESVSSSETPISNGRRQKAIPLRRHRAPDRSASPKGRLE) form a disordered region. Over residues 508-518 (VSSSETPISNG) the composition is skewed to polar residues. The segment at 508–585 (VSSSETPISN…IFLEKGFERE (78 aa)) is modulates adenylate cyclase activity by modulating the binding of G(s)alpha to the high-affinity G(s)alpha binding site in 7C1a/7C2. Residues 519 to 531 (RRQKAIPLRRHRA) are compositionally biased toward basic residues. 3 helical membrane passes run 596-616 (YDFACASLVFVCILLVHLLVM), 621-641 (TLGVSFGLVACLLGLVLSFCF), and 670-689 (LVLVVLTVGSLLTVAIINMP). Asn702 is a glycosylation site (N-linked (GlcNAc...) asparagine). Transmembrane regions (helical) follow at residues 719-738 (LLPYYTCSCILGFIACSVFL), 747-766 (MLLTVALVAYLLLFNLSPCW), and 813-833 (DLKIMVNFYLILFYATLILLS). Topologically, residues 834-1099 (RQIDYYCRLD…TAKFQGLGLN (266 aa)) are cytoplasmic. ATP-binding positions include Lys950, 1029–1031 (DIW), 1036–1040 (NVASR), and Lys1076.

Belongs to the adenylyl cyclase class-4/guanylyl cyclase family. It depends on Mg(2+) as a cofactor. Mn(2+) is required as a cofactor. Phosphorylated by PRKCD. Most abundant in heart, spleen and lung.

The protein resides in the membrane. The enzyme catalyses ATP = 3',5'-cyclic AMP + diphosphate. With respect to regulation, activated by the G protein alpha subunit. Activated by the G protein beta and gamma subunit complex. Activated by GNA13 and GNA12. Ethanol and phorbol 12,13-dibutanoate significantly potentiate adenylate cyclase activity generated in response to the activation of the prostanoid receptor by the agonist prostaglandin E1(1-) in a PKC-dependent manner. Inhibited by lithium. Catalyzes the formation of cAMP in response to activation of G protein-coupled receptors. Functions in signaling cascades activated namely by thrombin and sphingosine 1-phosphate and mediates regulation of cAMP synthesis through synergistic action of the stimulatory G alpha protein with GNA13. Also, during inflammation, mediates zymosan-induced increase intracellular cAMP, leading to protein kinase A pathway activation in order to modulate innate immune responses through heterotrimeric G proteins G(12/13). Functions in signaling cascades activated namely by dopamine and C5 alpha chain and mediates regulation of cAMP synthesis through synergistic action of the stimulatory G protein with G beta:gamma complex. Functions, through cAMP response regulation, to keep inflammation under control during bacterial infection by sensing the presence of serum factors, such as the bioactive lysophospholipid (LPA) that regulate LPS-induced TNF-alpha production. However, it is also required for the optimal functions of B and T cells during adaptive immune responses by regulating cAMP synthesis in both B and T cells. This Mus musculus (Mouse) protein is Adenylate cyclase type 7.